The following is an 800-amino-acid chain: Endonuclease MutS2 (800 aa).

ATP is bound at residue 336-343 (GPNTGGKT). The Smr domain occupies 725–800 (LDLRGVRYEA…GDGATIVELK (76 aa)).

The protein belongs to the DNA mismatch repair MutS family. MutS2 subfamily. As to quaternary structure, homodimer. Binds to stalled ribosomes, contacting rRNA.

Endonuclease that is involved in the suppression of homologous recombination and thus may have a key role in the control of bacterial genetic diversity. Functionally, acts as a ribosome collision sensor, splitting the ribosome into its 2 subunits. Detects stalled/collided 70S ribosomes which it binds and splits by an ATP-hydrolysis driven conformational change. Acts upstream of the ribosome quality control system (RQC), a ribosome-associated complex that mediates the extraction of incompletely synthesized nascent chains from stalled ribosomes and their subsequent degradation. Probably generates substrates for RQC. The sequence is that of Endonuclease MutS2 from Leuconostoc mesenteroides subsp. mesenteroides (strain ATCC 8293 / DSM 20343 / BCRC 11652 / CCM 1803 / JCM 6124 / NCDO 523 / NBRC 100496 / NCIMB 8023 / NCTC 12954 / NRRL B-1118 / 37Y).